The following is a 216-amino-acid chain: Urease accessory protein UreG (216 aa).

25–32 (GPVGSGKT) contributes to the GTP binding site.

The protein belongs to the SIMIBI class G3E GTPase family. UreG subfamily. As to quaternary structure, homodimer. UreD, UreF and UreG form a complex that acts as a GTP-hydrolysis-dependent molecular chaperone, activating the urease apoprotein by helping to assemble the nickel containing metallocenter of UreC. The UreE protein probably delivers the nickel.

The protein resides in the cytoplasm. In terms of biological role, facilitates the functional incorporation of the urease nickel metallocenter. This process requires GTP hydrolysis, probably effectuated by UreG. This chain is Urease accessory protein UreG, found in Burkholderia mallei (strain NCTC 10247).